Here is a 475-residue protein sequence, read N- to C-terminus: Aspartyl/glutamyl-tRNA(Asn/Gln) amidotransferase subunit B (475 aa).

It belongs to the GatB/GatE family. GatB subfamily. As to quaternary structure, heterotrimer of A, B and C subunits.

It catalyses the reaction L-glutamyl-tRNA(Gln) + L-glutamine + ATP + H2O = L-glutaminyl-tRNA(Gln) + L-glutamate + ADP + phosphate + H(+). It carries out the reaction L-aspartyl-tRNA(Asn) + L-glutamine + ATP + H2O = L-asparaginyl-tRNA(Asn) + L-glutamate + ADP + phosphate + 2 H(+). Functionally, allows the formation of correctly charged Asn-tRNA(Asn) or Gln-tRNA(Gln) through the transamidation of misacylated Asp-tRNA(Asn) or Glu-tRNA(Gln) in organisms which lack either or both of asparaginyl-tRNA or glutaminyl-tRNA synthetases. The reaction takes place in the presence of glutamine and ATP through an activated phospho-Asp-tRNA(Asn) or phospho-Glu-tRNA(Gln). This Chlorobaculum tepidum (strain ATCC 49652 / DSM 12025 / NBRC 103806 / TLS) (Chlorobium tepidum) protein is Aspartyl/glutamyl-tRNA(Asn/Gln) amidotransferase subunit B.